The chain runs to 491 residues: Nucleoside transporter 1.1 (491 aa).

6 helical membrane passes run 27-47, 82-102, 109-129, 136-156, 173-193, and 209-229; these read FYVY…VNAV, YNLI…LSWF, VRLL…MVVP, AGAV…KSIF, STMM…QIIV, and KIYY…LILL. Residues 260-273 are compositionally biased toward basic and acidic residues; that stretch reads CHTDEHPTHDKEGR. Disordered regions lie at residues 260–280 and 290–309; these read CHTD…SGKE and AAAK…PHEV. N-linked (GlcNAc...) asparagine glycosylation occurs at Asn274. Transmembrane regions (helical) follow at residues 333–353, 361–381, 395–415, 427–447, and 460–480; these read MFVA…GIAV, WFST…RFSP, WIIV…LLHS, VMEV…LVLG, and FVAG…GTVL.

This sequence belongs to the SLC29A/ENT transporter (TC 2.A.57) family.

Its subcellular location is the membrane. It carries out the reaction adenosine(in) + H(+)(in) = adenosine(out) + H(+)(out). It catalyses the reaction uridine(in) + H(+)(in) = uridine(out) + H(+)(out). Functionally, sodium-independent high affinity nucleoside:H(+) symporter; transports adenosine and uridine. Can transport cytidine and thymidine. This Leishmania donovani protein is Nucleoside transporter 1.1.